Consider the following 121-residue polypeptide: Large ribosomal subunit protein uL18 (121 aa).

This sequence belongs to the universal ribosomal protein uL18 family. Part of the 50S ribosomal subunit; part of the 5S rRNA/L5/L18/L25 subcomplex. Contacts the 5S and 23S rRNAs.

Functionally, this is one of the proteins that bind and probably mediate the attachment of the 5S RNA into the large ribosomal subunit, where it forms part of the central protuberance. The chain is Large ribosomal subunit protein uL18 from Pelobacter propionicus (strain DSM 2379 / NBRC 103807 / OttBd1).